We begin with the raw amino-acid sequence, 666 residues long: tRNA 5-methylaminomethyl-2-thiouridine biosynthesis bifunctional protein MnmC (666 aa).

The interval 1 to 245 (MKQYAIQPAT…KREMLCGVME (245 aa)) is tRNA (mnm(5)s(2)U34)-methyltransferase. The interval 270–666 (IGGGIASALL…RKLLKGKAVK (397 aa)) is FAD-dependent cmnm(5)s(2)U34 oxidoreductase.

This sequence in the N-terminal section; belongs to the methyltransferase superfamily. tRNA (mnm(5)s(2)U34)-methyltransferase family. It in the C-terminal section; belongs to the DAO family. It depends on FAD as a cofactor.

The protein resides in the cytoplasm. The catalysed reaction is 5-aminomethyl-2-thiouridine(34) in tRNA + S-adenosyl-L-methionine = 5-methylaminomethyl-2-thiouridine(34) in tRNA + S-adenosyl-L-homocysteine + H(+). Functionally, catalyzes the last two steps in the biosynthesis of 5-methylaminomethyl-2-thiouridine (mnm(5)s(2)U) at the wobble position (U34) in tRNA. Catalyzes the FAD-dependent demodification of cmnm(5)s(2)U34 to nm(5)s(2)U34, followed by the transfer of a methyl group from S-adenosyl-L-methionine to nm(5)s(2)U34, to form mnm(5)s(2)U34. This Salmonella paratyphi A (strain ATCC 9150 / SARB42) protein is tRNA 5-methylaminomethyl-2-thiouridine biosynthesis bifunctional protein MnmC.